The following is a 172-amino-acid chain: Ribosome maturation factor RimM (172 aa).

One can recognise a PRC barrel domain in the interval 98-171 (PGEYYYHQIV…KVIVELMEGL (74 aa)).

Belongs to the RimM family. In terms of assembly, binds ribosomal protein uS19.

It localises to the cytoplasm. Functionally, an accessory protein needed during the final step in the assembly of 30S ribosomal subunit, possibly for assembly of the head region. Essential for efficient processing of 16S rRNA. May be needed both before and after RbfA during the maturation of 16S rRNA. It has affinity for free ribosomal 30S subunits but not for 70S ribosomes. In Levilactobacillus brevis (strain ATCC 367 / BCRC 12310 / CIP 105137 / JCM 1170 / LMG 11437 / NCIMB 947 / NCTC 947) (Lactobacillus brevis), this protein is Ribosome maturation factor RimM.